Consider the following 737-residue polypeptide: Catalase-peroxidase (737 aa).

The segment at residues 89–219 (WHSAGTYRVF…LAASHMGLIY (131 aa)) is a cross-link (tryptophyl-tyrosyl-methioninium (Trp-Tyr) (with M-245)). The Proton acceptor role is filled by H90. A cross-link (tryptophyl-tyrosyl-methioninium (Tyr-Met) (with W-89)) is located at residues 219-245 (YVNPEGPNGNPDPKAAARDIRVTFGRM). A heme b-binding site is contributed by H260.

The protein belongs to the peroxidase family. Peroxidase/catalase subfamily. In terms of assembly, homodimer or homotetramer. Heme b serves as cofactor. Formation of the three residue Trp-Tyr-Met cross-link is important for the catalase, but not the peroxidase activity of the enzyme.

It localises to the cytoplasm. The catalysed reaction is H2O2 + AH2 = A + 2 H2O. It catalyses the reaction 2 H2O2 = O2 + 2 H2O. Functionally, bifunctional enzyme with both catalase and broad-spectrum peroxidase activity. This chain is Catalase-peroxidase, found in Aspergillus terreus (strain NIH 2624 / FGSC A1156).